A 147-amino-acid chain; its full sequence is MYLNTLSPNSKSHKKSKRVGRGIGSGFGKTSGRGHKGQKSRSGCKIRRGFEGGQMPLYRRIPKFGFVSLKKEKVAEVRLEDLKNFSNCIINLQFLKKTGLIKKNIKYVKIISSGSIITNILIIRNLFVSKSVRNIIESSGGKIEENN.

The segment covering 1-10 has biased composition (polar residues); sequence MYLNTLSPNS. Residues 1 to 48 are disordered; sequence MYLNTLSPNSKSHKKSKRVGRGIGSGFGKTSGRGHKGQKSRSGCKIRR. Basic residues predominate over residues 11 to 20; it reads KSHKKSKRVG. Gly residues predominate over residues 21-31; it reads RGIGSGFGKTS. The segment covering 32–47 has biased composition (basic residues); the sequence is GRGHKGQKSRSGCKIR.

This sequence belongs to the universal ribosomal protein uL15 family. In terms of assembly, part of the 50S ribosomal subunit.

In terms of biological role, binds to the 23S rRNA. This is Large ribosomal subunit protein uL15 from Buchnera aphidicola subsp. Baizongia pistaciae (strain Bp).